We begin with the raw amino-acid sequence, 451 residues long: Phosphoglucosamine mutase (451 aa).

Catalysis depends on S101, which acts as the Phosphoserine intermediate. Mg(2+) contacts are provided by S101, D242, D244, and D246. S101 bears the Phosphoserine mark.

The protein belongs to the phosphohexose mutase family. The cofactor is Mg(2+). Post-translationally, activated by phosphorylation.

It catalyses the reaction alpha-D-glucosamine 1-phosphate = D-glucosamine 6-phosphate. Catalyzes the conversion of glucosamine-6-phosphate to glucosamine-1-phosphate. This is Phosphoglucosamine mutase from Beijerinckia indica subsp. indica (strain ATCC 9039 / DSM 1715 / NCIMB 8712).